Here is a 718-residue protein sequence, read N- to C-terminus: Nucleolar protein 11 (718 aa).

Position 346 is an N6-methyllysine (K346).

In terms of assembly, interacts with UTP4. Interacts with FBL/fibrillarin in a transcription-dependent manner. May associate with the proposed t-UTP subcomplex of the SSU processome containing at least UTP4, WDR43, HEATR1, UTP15, WDR75.

It localises to the nucleus. Its subcellular location is the nucleolus. In terms of biological role, ribosome biogenesis factor. May be required for both optimal rDNA transcription and small subunit (SSU) pre-rRNA processing at sites A', A0, 1 and 2b. This is Nucleolar protein 11 (NOL11) from Pongo abelii (Sumatran orangutan).